The primary structure comprises 90 residues: MANVNGYVDLLEGIPDETKEEMVELNNTLDKLDSCLDALEEQNDSLNAKLRDLLQSSQQARQELQAERQSLETEQNTEPSTKSDQEQKKQ.

A coiled-coil region spans residues 16-78 (DETKEEMVEL…QSLETEQNTE (63 aa)). The disordered stretch occupies residues 57–90 (SQQARQELQAERQSLETEQNTEPSTKSDQEQKKQ). Residues 81-90 (TKSDQEQKKQ) show a composition bias toward basic and acidic residues.

It belongs to the UPF0184 (EST00098) family.

In Branchiostoma floridae (Florida lancelet), this protein is UPF0184 protein.